A 299-amino-acid polypeptide reads, in one-letter code: AUGMIN subunit 1 (299 aa).

Ser2 is modified (N-acetylserine). 2 coiled-coil regions span residues 76-96 (RLKA…LESA) and 164-184 (RKAI…EDDV).

Belongs to the HAUS1 family. In terms of assembly, part of the augmin complex composed of 8 subunits. The complex acts on microtubules and interacts with gamma-tubulin in spindles and the phragmoplast. Interacts with AUG3.

The protein resides in the cytoplasm. It localises to the cytoskeleton. The protein localises to the spindle. Its subcellular location is the phragmoplast. Involved in microtubules reorganization during spindle and phragmoplast development. The protein is AUGMIN subunit 1 of Arabidopsis thaliana (Mouse-ear cress).